Consider the following 278-residue polypeptide: Putative B3 domain-containing protein At2g21920 (278 aa).

A DNA-binding region (TF-B3) is located at residues 168-275 (ISKTLSRTDV…KFIILNFEYN (108 aa)).

It is found in the nucleus. The polypeptide is Putative B3 domain-containing protein At2g21920 (Arabidopsis thaliana (Mouse-ear cress)).